The sequence spans 216 residues: Probable Golgi SNAP receptor complex member 2 (216 aa).

At Met-1 to Arg-194 the chain is on the cytoplasmic side. Residues Gln-62 to Gln-103 adopt a coiled-coil conformation. The helical; Anchor for type IV membrane protein transmembrane segment at Ile-195–Val-215 threads the bilayer. A topological domain (vesicular) is located at residue Leu-216.

This sequence belongs to the GOSR2 family. As to quaternary structure, part of a unique SNARE complex.

It localises to the golgi apparatus. The protein localises to the cis-Golgi network membrane. Its subcellular location is the golgi apparatus membrane. The protein resides in the endoplasmic reticulum membrane. Its function is as follows. Involved in transport of proteins from the cis/medial-Golgi to the trans-Golgi network. The polypeptide is Probable Golgi SNAP receptor complex member 2 (Drosophila melanogaster (Fruit fly)).